A 498-amino-acid chain; its full sequence is MFFKPDFRPRCAKWLIATGLFLMLGACVEKPTTLERVKEDGVLRVITRNSPATYFQDRNGETGFEYELVKRFADDLGVELKIETADNLDDLFDQMNKPGGPVLGAAGLIETPLRKQQARFSHSYLEVTPQVVYRNGQSRPTDPGDLVGKRIVVLKGSAHAEQLAALKAQNPGIQYEESDAVEVVDLLRMVDEGQIDLTLVDSNELAMNQVYFPNVRVAFDLGEARAQRWAVAPGEDNSLLNEINAYLDKVEKNGTLQRLKDRYYGHVDVLGYVGAYTFAQHLQERLPKYEKHFQTSAKKEQVDWRLLAAIGYQESMWQPTVTSKTGVRGLMMLTQNTAQAMGVSNRLDARQSIQGGAKYFAYIKDQLDDSIKEPDRTWLALASYNIGSGHLEDARKLAQNEGLNPDKWLDVKKMLPRLAQKKWYSKTRYGYARGGEPVHFVANIRRYYDILTWVTQPQLEGSQVADGNLHVPGVDKTQPPVPPASPVPSSSSTDESPL.

Positions 1-29 (MFFKPDFRPRCAKWLIATGLFLMLGACVE) are cleaved as a signal peptide. The tract at residues 30–267 (KPTTLERVKE…RLKDRYYGHV (238 aa)) is non-LT domain. Positions 268–498 (DVLGYVGAYT…SSSSTDESPL (231 aa)) are LT domain. Residue E314 is part of the active site. Residues 464 to 498 (VADGNLHVPGVDKTQPPVPPASPVPSSSSTDESPL) are disordered.

It in the N-terminal section; belongs to the bacterial solute-binding protein 3 family. In the C-terminal section; belongs to the transglycosylase Slt family.

Its subcellular location is the cell outer membrane. It carries out the reaction Exolytic cleavage of the (1-&gt;4)-beta-glycosidic linkage between N-acetylmuramic acid (MurNAc) and N-acetylglucosamine (GlcNAc) residues in peptidoglycan, from either the reducing or the non-reducing ends of the peptidoglycan chains, with concomitant formation of a 1,6-anhydrobond in the MurNAc residue.. Functionally, murein-degrading enzyme that degrades murein glycan strands and insoluble, high-molecular weight murein sacculi, with the concomitant formation of a 1,6-anhydromuramoyl product. Lytic transglycosylases (LTs) play an integral role in the metabolism of the peptidoglycan (PG) sacculus. Their lytic action creates space within the PG sacculus to allow for its expansion as well as for the insertion of various structures such as secretion systems and flagella. The polypeptide is Membrane-bound lytic murein transglycosylase F (Pseudomonas syringae pv. syringae (strain B728a)).